A 244-amino-acid chain; its full sequence is Ras-like protein family member 11B (244 aa).

The interval 19–242 (PSSRVIKIAV…VLSAKVRTVT (224 aa)) is small GTPase-like. Residues 30 to 37 (GGSGVGKT), 77 to 81 (DTPGV), and 142 to 145 (NKAD) each bind GTP. Residues 200-222 (INATSSVTEKKRSPLIPRPKSPN) form a disordered region.

It belongs to the small GTPase superfamily. Ras family.

It carries out the reaction GTP + H2O = GDP + phosphate + H(+). This Danio rerio (Zebrafish) protein is Ras-like protein family member 11B.